Reading from the N-terminus, the 257-residue chain is 1-(5-phosphoribosyl)-5-[(5-phosphoribosylamino)methylideneamino] imidazole-4-carboxamide isomerase (257 aa).

Asp8 acts as the Proton acceptor in catalysis. The Proton donor role is filled by Asp129.

The protein belongs to the HisA/HisF family.

It is found in the cytoplasm. The enzyme catalyses 1-(5-phospho-beta-D-ribosyl)-5-[(5-phospho-beta-D-ribosylamino)methylideneamino]imidazole-4-carboxamide = 5-[(5-phospho-1-deoxy-D-ribulos-1-ylimino)methylamino]-1-(5-phospho-beta-D-ribosyl)imidazole-4-carboxamide. Its pathway is amino-acid biosynthesis; L-histidine biosynthesis; L-histidine from 5-phospho-alpha-D-ribose 1-diphosphate: step 4/9. The protein is 1-(5-phosphoribosyl)-5-[(5-phosphoribosylamino)methylideneamino] imidazole-4-carboxamide isomerase of Nostoc punctiforme (strain ATCC 29133 / PCC 73102).